Here is a 188-residue protein sequence, read N- to C-terminus: dTTP/UTP pyrophosphatase (188 aa).

Asp-70 (proton acceptor) is an active-site residue.

Belongs to the Maf family. YhdE subfamily. Requires a divalent metal cation as cofactor.

It is found in the cytoplasm. The enzyme catalyses dTTP + H2O = dTMP + diphosphate + H(+). The catalysed reaction is UTP + H2O = UMP + diphosphate + H(+). Functionally, nucleoside triphosphate pyrophosphatase that hydrolyzes dTTP and UTP. May have a dual role in cell division arrest and in preventing the incorporation of modified nucleotides into cellular nucleic acids. This Clostridium beijerinckii (strain ATCC 51743 / NCIMB 8052) (Clostridium acetobutylicum) protein is dTTP/UTP pyrophosphatase.